A 110-amino-acid polypeptide reads, in one-letter code: Antimicrobial peptide microplusin (110 aa).

An N-terminal signal peptide occupies residues 1–20; sequence MKAIFVSALLVVALVASTSA. Intrachain disulfides connect C26-C72, C39-C100, and C61-C66.

In terms of tissue distribution, expressed in the hemocytes, fat body and ovaries.

The protein localises to the secreted. Its function is as follows. Has bacteriostatic activity against the Gram-positive bacterium M.luteus, but not against Gram-negative bacterium E.coli SBS363. Has fungistatic activity against C.neoformans, but not C.albicans. Binds and sequesters copper and iron ions. Copper-chelating is crucial for antimicrobial activity against M.luteus. In Rhipicephalus microplus (Cattle tick), this protein is Antimicrobial peptide microplusin.